Consider the following 248-residue polypeptide: Triosephosphate isomerase (248 aa).

9-11 (NWK) serves as a coordination point for substrate. Residue His94 is the Electrophile of the active site. The active-site Proton acceptor is Glu166. Substrate contacts are provided by residues Gly172, Ser211, and 232 to 233 (GG).

Belongs to the triosephosphate isomerase family. Homodimer.

It localises to the cytoplasm. It carries out the reaction D-glyceraldehyde 3-phosphate = dihydroxyacetone phosphate. It participates in carbohydrate biosynthesis; gluconeogenesis. The protein operates within carbohydrate degradation; glycolysis; D-glyceraldehyde 3-phosphate from glycerone phosphate: step 1/1. Its function is as follows. Involved in the gluconeogenesis. Catalyzes stereospecifically the conversion of dihydroxyacetone phosphate (DHAP) to D-glyceraldehyde-3-phosphate (G3P). The sequence is that of Triosephosphate isomerase from Herminiimonas arsenicoxydans.